The sequence spans 190 residues: MAKATTIKEALARWEEKTGQRPSEAKEIKLYAQIPPIEKMDASLSMLANCEKLSLSTNCIEKIANLNGLKNLRILSLGRNNIKNLNGLEAVGDTLEELWISYNFIEKLKGIHIMKKLKILYMSNNLVKDWAEFVKLAELPCLEDLVFVGNPLEEKHSAENNWIEEATKRVPKLKKLDGTPVIKGDEEEDN.

Residue Ala2 is modified to N-acetylalanine. LRR repeat units lie at residues 49-70 (NCEKLSLSTNCIEKIANLNGLK), 71-92 (NLRILSLGRNNIKNLNGLEAVG), 94-115 (TLEELWISYNFIEKLKGIHIMK), and 116-137 (KLKILYMSNNLVKDWAEFVKLA). Ser56 carries the post-translational modification Phosphoserine. One can recognise an LRRCT domain in the interval 150 to 190 (NPLEEKHSAENNWIEEATKRVPKLKKLDGTPVIKGDEEEDN).

The protein belongs to the dynein light chain LC1-type family. In terms of assembly, interacts with ZMYND10 (via C-terminus). Interacts with DNAH5, a outer arm dynein heavy chain. Interacts with tubulin located within the A-tubule of the outer doublets in a ATP-independent manner. In terms of tissue distribution, expressed in tissues carrying motile cilia such as respiratory epithelia, ependyma and testis.

It is found in the cytoplasm. The protein localises to the cytoskeleton. The protein resides in the cilium axoneme. Functionally, part of the multisubunit axonemal ATPase complexes that generate the force for cilia motility and govern beat frequency. Component of the outer arm dynein (ODA). May be involved in a mechanosensory feedback mechanism controlling ODA activity based on external conformational cues by tethering the outer arm dynein heavy chain (DNAH5) to the microtubule within the axoneme. Important for ciliary function in the airways and for the function of the cilia that produce the nodal flow essential for the determination of the left-right asymmetry. The protein is Dynein axonemal light chain 1 of Homo sapiens (Human).